The following is a 205-amino-acid chain: Sarcosine oxidase subunit gamma (205 aa).

This sequence belongs to the SoxG family. As to quaternary structure, heterotetramer composed of subunits alpha (SoxA), beta (SoxB), gamma (SoxG) and delta (SoxD).

The protein localises to the cytoplasm. The catalysed reaction is sarcosine + (6S)-5,6,7,8-tetrahydrofolate + O2 = (6R)-5,10-methylene-5,6,7,8-tetrahydrofolate + glycine + H2O2. It catalyses the reaction sarcosine + O2 + H2O = formaldehyde + glycine + H2O2. Inhibited by Zn(2+), Cu(2+), Cd(2+), Hg(2+), Ag(+), p-chloromercuribenzoate (p-CMB), iodoacetamide, N-ethylmaleimide, CN(-), o-phenanthroline and sodium lauryl sulfate. Its function is as follows. In the presence of tetrahydrofolate, catalyzes the oxidative demethylation of sarcosine to yield glycine, 5,10-methylenetetrahydrofolate and hydrogen peroxide. In the absence of tetrahydrofolate, catalyzes the oxidative demethylation of sarcosine to yield glycine, formaldehyde and hydrogen peroxide. Can also use N-methyl-L-alanine and N-ethyl-L-glycine. Is very specific for oxygen as an acceptor. The polypeptide is Sarcosine oxidase subunit gamma (Corynebacterium sp. (strain U-96)).